We begin with the raw amino-acid sequence, 338 residues long: Uroporphyrinogen decarboxylase (338 aa).

Substrate contacts are provided by residues 25-29 (RQAGR), Phe44, Asp75, Tyr146, Ser201, and His314.

It belongs to the uroporphyrinogen decarboxylase family. In terms of assembly, homodimer.

It localises to the cytoplasm. The enzyme catalyses uroporphyrinogen III + 4 H(+) = coproporphyrinogen III + 4 CO2. The protein operates within porphyrin-containing compound metabolism; protoporphyrin-IX biosynthesis; coproporphyrinogen-III from 5-aminolevulinate: step 4/4. In terms of biological role, catalyzes the decarboxylation of four acetate groups of uroporphyrinogen-III to yield coproporphyrinogen-III. In Aquifex aeolicus (strain VF5), this protein is Uroporphyrinogen decarboxylase.